Reading from the N-terminus, the 228-residue chain is UPF0758 protein stu1465 (228 aa).

Residues 103–225 (QIMSSQQVAR…YYSFREERED (123 aa)) enclose the MPN domain. Residues His174, His176, and Asp187 each contribute to the Zn(2+) site. The short motif at 174 to 187 (HNHPSGEAYPSRND) is the JAMM motif element.

It belongs to the UPF0758 family.

The sequence is that of UPF0758 protein stu1465 from Streptococcus thermophilus (strain ATCC BAA-250 / LMG 18311).